The following is a 156-amino-acid chain: Small ribosomal subunit protein uS7 (156 aa).

The protein belongs to the universal ribosomal protein uS7 family. As to quaternary structure, part of the 30S ribosomal subunit. Contacts proteins S9 and S11.

Functionally, one of the primary rRNA binding proteins, it binds directly to 16S rRNA where it nucleates assembly of the head domain of the 30S subunit. Is located at the subunit interface close to the decoding center, probably blocks exit of the E-site tRNA. The sequence is that of Small ribosomal subunit protein uS7 from Shewanella sp. (strain ANA-3).